A 157-amino-acid polypeptide reads, in one-letter code: Transcription elongation factor GreA (157 aa).

This sequence belongs to the GreA/GreB family.

Functionally, necessary for efficient RNA polymerase transcription elongation past template-encoded arresting sites. The arresting sites in DNA have the property of trapping a certain fraction of elongating RNA polymerases that pass through, resulting in locked ternary complexes. Cleavage of the nascent transcript by cleavage factors such as GreA or GreB allows the resumption of elongation from the new 3'terminus. GreA releases sequences of 2 to 3 nucleotides. This Bartonella tribocorum (strain CIP 105476 / IBS 506) protein is Transcription elongation factor GreA.